Reading from the N-terminus, the 334-residue chain is MKEIIAKLADFKDLSSAEMTDVIERIVTGQVAESQIAALLLGLKMKGETIEERTALAQVMRGHAKQIPTTIRTAMDNCGTGGDKSFSFNISTTAAFVLAGGGIKMAKHGNRSISSKSGSADVLEALGINLDLDATSLGKVFEQTGIVFLFAKNMHPAMKYIMPARLSLGIPTIMNLTGPLIHPMNLETQLLGTSRPDMLESTAEVLKNMGRKRAVVVSGPDGLDEAGLHGRTQYALLENGQISLHSFLPSDIGMKEIPLEAIRGGNAKENAEILLSVLQNQASPYLETTVLNAGLGFYANGKSDSIEEGIALARQVIASGAAYEKLKQLQEYQK.

Residues Gly-79, 82–83, Ser-87, 89–92, 107–115, and Ser-119 each bind 5-phospho-alpha-D-ribose 1-diphosphate; these read GD, NIST, and KHGNRSISS. Anthranilate is bound at residue Gly-79. Ser-91 is a binding site for Mg(2+). Position 110 (Asn-110) interacts with anthranilate. Arg-165 lines the anthranilate pocket. Mg(2+) contacts are provided by Asp-224 and Glu-225.

The protein belongs to the anthranilate phosphoribosyltransferase family. Homodimer. Requires Mg(2+) as cofactor.

It carries out the reaction N-(5-phospho-beta-D-ribosyl)anthranilate + diphosphate = 5-phospho-alpha-D-ribose 1-diphosphate + anthranilate. It participates in amino-acid biosynthesis; L-tryptophan biosynthesis; L-tryptophan from chorismate: step 2/5. Functionally, catalyzes the transfer of the phosphoribosyl group of 5-phosphorylribose-1-pyrophosphate (PRPP) to anthranilate to yield N-(5'-phosphoribosyl)-anthranilate (PRA). The protein is Anthranilate phosphoribosyltransferase of Streptococcus gordonii (strain Challis / ATCC 35105 / BCRC 15272 / CH1 / DL1 / V288).